The sequence spans 267 residues: Probable membrane transporter protein MJ0441 (267 aa).

Helical transmembrane passes span 10-30, 31-51, 55-75, 87-107, 158-178, 185-205, and 213-233; these read LLLL…GSLF, GIGG…YFGI, VKFA…ISIF, ASIT…FLVV, FLSG…LAMA, AVAI…ISYL, and IYNI…PIIY.

This sequence belongs to the 4-toluene sulfonate uptake permease (TSUP) (TC 2.A.102) family.

The protein localises to the cell membrane. In Methanocaldococcus jannaschii (strain ATCC 43067 / DSM 2661 / JAL-1 / JCM 10045 / NBRC 100440) (Methanococcus jannaschii), this protein is Probable membrane transporter protein MJ0441.